Reading from the N-terminus, the 590-residue chain is Aspartate--tRNA ligase (590 aa).

E180 is a binding site for L-aspartate. Residues 204–207 form an aspartate region; it reads QLFK. R226 is an L-aspartate binding site. ATP-binding positions include 226–228 and Q235; that span reads RDE. Residue H454 coordinates L-aspartate. Position 488 (E488) interacts with ATP. Residue R495 participates in L-aspartate binding. Residue 540-543 coordinates ATP; that stretch reads GFDR.

The protein belongs to the class-II aminoacyl-tRNA synthetase family. Type 1 subfamily. In terms of assembly, homodimer.

The protein resides in the cytoplasm. The catalysed reaction is tRNA(Asp) + L-aspartate + ATP = L-aspartyl-tRNA(Asp) + AMP + diphosphate. Catalyzes the attachment of L-aspartate to tRNA(Asp) in a two-step reaction: L-aspartate is first activated by ATP to form Asp-AMP and then transferred to the acceptor end of tRNA(Asp). This is Aspartate--tRNA ligase from Clostridium kluyveri (strain NBRC 12016).